The primary structure comprises 165 residues: Glutamyl-tRNA(Gln) amidotransferase subunit F, mitochondrial (165 aa).

The span at 137-153 (VSDQRGERGFDTSELRT) shows a compositional bias: basic and acidic residues. Positions 137 to 165 (VSDQRGERGFDTSELRTRINRAKSTAEKE) are disordered.

This sequence belongs to the GatF family. As to quaternary structure, subunit of the heterotrimeric GatFAB amidotransferase (AdT) complex, composed of A, B and F subunits.

The protein localises to the mitochondrion inner membrane. It catalyses the reaction L-glutamyl-tRNA(Gln) + L-glutamine + ATP + H2O = L-glutaminyl-tRNA(Gln) + L-glutamate + ADP + phosphate + H(+). Allows the formation of correctly charged Gln-tRNA(Gln) through the transamidation of misacylated Glu-tRNA(Gln) in the mitochondria. The reaction takes place in the presence of glutamine and ATP through an activated gamma-phospho-Glu-tRNA(Gln). Required for proper protein synthesis within the mitochondrion. This is Glutamyl-tRNA(Gln) amidotransferase subunit F, mitochondrial from Clavispora lusitaniae (strain ATCC 42720) (Yeast).